The primary structure comprises 288 residues: Shikimate dehydrogenase (NADP(+)) (288 aa).

Residues 15–17 (SKS) and threonine 64 contribute to the shikimate site. The Proton acceptor role is filled by lysine 68. NADP(+) is bound at residue glutamate 83. Shikimate is bound by residues asparagine 92 and aspartate 117. NADP(+)-binding positions include 141-145 (GAGGA), 165-170 (NRTLSK), and methionine 232. Residue tyrosine 234 coordinates shikimate. Glycine 254 provides a ligand contact to NADP(+).

It belongs to the shikimate dehydrogenase family. Homodimer.

It carries out the reaction shikimate + NADP(+) = 3-dehydroshikimate + NADPH + H(+). It functions in the pathway metabolic intermediate biosynthesis; chorismate biosynthesis; chorismate from D-erythrose 4-phosphate and phosphoenolpyruvate: step 4/7. Functionally, involved in the biosynthesis of the chorismate, which leads to the biosynthesis of aromatic amino acids. Catalyzes the reversible NADPH linked reduction of 3-dehydroshikimate (DHSA) to yield shikimate (SA). This is Shikimate dehydrogenase (NADP(+)) from Psychrobacter arcticus (strain DSM 17307 / VKM B-2377 / 273-4).